Here is a 513-residue protein sequence, read N- to C-terminus: Lysine--tRNA ligase (513 aa).

2 residues coordinate Mg(2+): glutamate 423 and glutamate 430.

This sequence belongs to the class-II aminoacyl-tRNA synthetase family. As to quaternary structure, homodimer. Requires Mg(2+) as cofactor.

The protein resides in the cytoplasm. The enzyme catalyses tRNA(Lys) + L-lysine + ATP = L-lysyl-tRNA(Lys) + AMP + diphosphate. This chain is Lysine--tRNA ligase, found in Anaeromyxobacter dehalogenans (strain 2CP-C).